Here is a 310-residue protein sequence, read N- to C-terminus: Glutaminase (310 aa).

Ser67, Asn118, Glu161, Asn168, Tyr192, Tyr244, and Val262 together coordinate substrate.

Belongs to the glutaminase family. In terms of assembly, homotetramer.

The catalysed reaction is L-glutamine + H2O = L-glutamate + NH4(+). This is Glutaminase from Legionella pneumophila subsp. pneumophila (strain Philadelphia 1 / ATCC 33152 / DSM 7513).